Here is a 173-residue protein sequence, read N- to C-terminus: MASIPATVATVAQANMVAPFTGLKSNAAFPVTKKVNDFSTLASNGGRVQCMKVWPPLGKKRYETLSYLPNLTEVQLAKEVDYLLRNKWVPCLEFELEHGFVYRENARSPGYYDGRYWTMWKLPMFGCTDSAQVMKELQECKKEYPQAWIRIIGFDNVRQVQCISFIASKPDGF.

A chloroplast-targeting transit peptide spans 1–49 (MASIPATVATVAQANMVAPFTGLKSNAAFPVTKKVNDFSTLASNGGRVQ).

Belongs to the RuBisCO small chain family. As to quaternary structure, heterohexadecamer of 8 large and 8 small subunits.

It localises to the plastid. Its subcellular location is the chloroplast. In terms of biological role, ruBisCO catalyzes two reactions: the carboxylation of D-ribulose 1,5-bisphosphate, the primary event in carbon dioxide fixation, as well as the oxidative fragmentation of the pentose substrate. Both reactions occur simultaneously and in competition at the same active site. Although the small subunit is not catalytic it is essential for maximal activity. This is Ribulose bisphosphate carboxylase small subunit, chloroplastic 7 from Flaveria pringlei.